Here is an 895-residue protein sequence, read N- to C-terminus: Probable LRR receptor-like serine/threonine-protein kinase At5g48740 (895 aa).

An N-terminal signal peptide occupies residues 1–16 (MLFWVLLSSFCVFCFS). Over 17 to 544 (SPDGFLSLSC…INKKQRKQNR (528 aa)) the chain is Extracellular. 7 N-linked (GlcNAc...) asparagine glycosylation sites follow: Asn36, Asn50, Asn60, Asn140, Asn195, Asn234, and Asn318. LRR repeat units follow at residues 385-407 (RVTS…GDLL), 408-430 (DLKT…GSLK), 431-453 (DLQK…EDLV), 454-477 (NLEV…GKLK), 478-500 (KLRL…LNIT), and 511-532 (CLSF…PQVT). 5 N-linked (GlcNAc...) asparagine glycosylation sites follow: Asn416, Asn436, Asn462, Asn498, and Asn521. Residues 545–565 (IAILLGVSGGALFATFLVFVF) traverse the membrane as a helical segment. Topologically, residues 566-895 (MSIFTRRQRN…SYLAASAHTD (330 aa)) are cytoplasmic. One can recognise a Protein kinase domain in the interval 606–888 (RNFKEVIGRG…EAYSLQLSYL (283 aa)). Residues 612–620 (IGRGSFGAV) and Lys634 contribute to the ATP site. Tyr679 is modified (phosphotyrosine). The active-site Proton acceptor is Asp732. The residue at position 736 (Ser736) is a Phosphoserine. Residues Thr767 and Thr772 each carry the phosphothreonine modification. Tyr780 is subject to Phosphotyrosine.

This sequence belongs to the protein kinase superfamily. Ser/Thr protein kinase family.

The protein resides in the membrane. It catalyses the reaction L-seryl-[protein] + ATP = O-phospho-L-seryl-[protein] + ADP + H(+). It carries out the reaction L-threonyl-[protein] + ATP = O-phospho-L-threonyl-[protein] + ADP + H(+). This Arabidopsis thaliana (Mouse-ear cress) protein is Probable LRR receptor-like serine/threonine-protein kinase At5g48740.